Here is a 377-residue protein sequence, read N- to C-terminus: Anhydro-N-acetylmuramic acid kinase (377 aa).

Position 14-21 (14-21) interacts with ATP; it reads GTSLDGVD.

The protein belongs to the anhydro-N-acetylmuramic acid kinase family.

The enzyme catalyses 1,6-anhydro-N-acetyl-beta-muramate + ATP + H2O = N-acetyl-D-muramate 6-phosphate + ADP + H(+). It functions in the pathway amino-sugar metabolism; 1,6-anhydro-N-acetylmuramate degradation. It participates in cell wall biogenesis; peptidoglycan recycling. In terms of biological role, catalyzes the specific phosphorylation of 1,6-anhydro-N-acetylmuramic acid (anhMurNAc) with the simultaneous cleavage of the 1,6-anhydro ring, generating MurNAc-6-P. Is required for the utilization of anhMurNAc either imported from the medium or derived from its own cell wall murein, and thus plays a role in cell wall recycling. The sequence is that of Anhydro-N-acetylmuramic acid kinase from Pasteurella multocida (strain Pm70).